The chain runs to 284 residues: Anaerobic dimethyl sulfoxide reductase chain YnfH (284 aa).

At 1 to 9 (MGNGWHEWP) the chain is on the periplasmic side. A helical transmembrane segment spans residues 10–30 (LVIFTVLGQCVVGALIVSGIG). Topologically, residues 31 to 45 (WFAAKNDADRQRIVR) are cytoplasmic. Residues 46–66 (GMFFLWLLMGVGFIASVMHLG) form a helical membrane-spanning segment. Topologically, residues 67-86 (SPLRAFNSLNRIGASGLSNE) are periplasmic. A helical membrane pass occupies residues 87-107 (IAAGSIFFAVGGLWWLVAVIG). The Cytoplasmic segment spans residues 108–115 (KMPQALGK). The chain crosses the membrane as a helical span at residues 116-136 (LWLLFSMALGVIFVWMMTCVY). Residues 137 to 148 (QIDTVPTWHNGY) lie on the Periplasmic side of the membrane. Residues 149-169 (TTLAFFLTVLLSGPILAAAIL) traverse the membrane as a helical segment. Residues 170 to 180 (RAARVTFNTTP) are Cytoplasmic-facing. A helical membrane pass occupies residues 181-201 (FAIISVLALIACAGVIVLQGL). The Periplasmic segment spans residues 202-222 (SLASIHSSVQQASALVPDYAS). Residues 223–243 (LQVWRVVLLCAGLGCWLCPLI) form a helical membrane-spanning segment. Residues 244-250 (RRREPHV) are Cytoplasmic-facing. The helical transmembrane segment at 251 to 271 (AGLILGLILILGGEMIGRVLF) threads the bilayer. At 272–284 (YGLHMTVGMAIAG) the chain is on the periplasmic side.

The protein belongs to the DmsC family. As to quaternary structure, the complex consists of three subunits: YnfF, the reductase; YnfG, an electron transfer protein, and YnfH, a membrane anchor protein.

It is found in the cell inner membrane. Its function is as follows. Terminal reductase during anaerobic growth on various sulfoxide and N-oxide compounds. The C subunit anchors the other two subunits to the membrane and stabilize the catalytic subunits. This Escherichia coli (strain K12) protein is Anaerobic dimethyl sulfoxide reductase chain YnfH (ynfH).